The following is a 665-amino-acid chain: Succinate dehydrogenase [ubiquinone] flavoprotein subunit A, mitochondrial (665 aa).

The transit peptide at Met1 to Asp45 directs the protein to the mitochondrion. 5 residues coordinate FAD: Ala72, Ala75, Thr94, Lys95, and Ser101. Residue His102 is modified to Tele-8alpha-FAD histidine. Thr103, Gly108, Ala224, and Asp278 together coordinate FAD. Residues His299, Arg343, and His410 each contribute to the oxaloacetate site. Residue Arg343 is the Proton acceptor of the active site. Glu443 provides a ligand contact to FAD. Oxaloacetate is bound by residues Arg454 and Ala457. FAD-binding residues include Ser459 and Leu460.

It belongs to the FAD-dependent oxidoreductase 2 family. FRD/SDH subfamily. In terms of assembly, component of complex II composed of four subunits: a flavoprotein (FP), an iron-sulfur protein (IP), and a cytochrome b composed of a large and a small subunit. FAD is required as a cofactor.

It localises to the mitochondrion inner membrane. The catalysed reaction is a ubiquinone + succinate = a ubiquinol + fumarate. It catalyses the reaction (R)-malate + a quinone = enol-oxaloacetate + a quinol. It carries out the reaction (S)-malate + a quinone = enol-oxaloacetate + a quinol. The protein operates within carbohydrate metabolism; tricarboxylic acid cycle; fumarate from succinate (eukaryal route): step 1/1. Enol-oxaloacetate inhibits the succinate dehydrogenase activity. Flavoprotein (FP) subunit of succinate dehydrogenase (SDH) that is involved in complex II of the mitochondrial electron transport chain and is responsible for transferring electrons from succinate to ubiquinone (coenzyme Q). SDH also oxidizes malate to the non-canonical enol form of oxaloacetate, enol-oxaloacetate. Enol-oxaloacetate, which is a potent inhibitor of the succinate dehydrogenase activity, is further isomerized into keto-oxaloacetate. In Xenopus laevis (African clawed frog), this protein is Succinate dehydrogenase [ubiquinone] flavoprotein subunit A, mitochondrial (sdha-a).